A 148-amino-acid polypeptide reads, in one-letter code: Ubiquitin-conjugating enzyme E2-16 kDa (148 aa).

The UBC core domain occupies 2–148 (SSSKRIAKEL…AKEWTKKYAV (147 aa)). Ser-12 carries the post-translational modification Phosphoserine. Cys-86 (glycyl thioester intermediate) is an active-site residue. Lys-91 participates in a covalent cross-link: Glycyl lysine isopeptide (Lys-Gly) (interchain with G-Cter in ubiquitin).

This sequence belongs to the ubiquitin-conjugating enzyme family. In terms of assembly, component of the RSP5-UBA1-UBC5 ubiquitin ligase complex composed of E3 RSP5, E1 UBA1 and E2 UBC5. Post-translationally, the N-terminus is blocked.

It carries out the reaction S-ubiquitinyl-[E1 ubiquitin-activating enzyme]-L-cysteine + [E2 ubiquitin-conjugating enzyme]-L-cysteine = [E1 ubiquitin-activating enzyme]-L-cysteine + S-ubiquitinyl-[E2 ubiquitin-conjugating enzyme]-L-cysteine.. It functions in the pathway protein modification; protein ubiquitination. Its function is as follows. Catalyzes the covalent attachment of ubiquitin to other proteins. Mediates the selective degradation of short-lived and abnormal proteins. The RSP5-UBA1-UBC5 ubiquitin ligase complex ubiquitinates RPO21 forming 'Lys-63'-linked polyubiquitin chains. This is Ubiquitin-conjugating enzyme E2-16 kDa (UBC5) from Saccharomyces cerevisiae (strain ATCC 204508 / S288c) (Baker's yeast).